Consider the following 1407-residue polypeptide: DNA-directed RNA polymerase subunit beta' (1407 aa).

The Zn(2+) site is built by cysteine 70, cysteine 72, cysteine 85, and cysteine 88. 3 residues coordinate Mg(2+): aspartate 460, aspartate 462, and aspartate 464. 4 residues coordinate Zn(2+): cysteine 814, cysteine 889, cysteine 896, and cysteine 899. Positions 1384–1407 are disordered; the sequence is LVGRSTSSGTEVTSPSKDAIPLGG. The span at 1386-1399 shows a compositional bias: polar residues; that stretch reads GRSTSSGTEVTSPS.

Belongs to the RNA polymerase beta' chain family. The RNAP catalytic core consists of 2 alpha, 1 beta, 1 beta' and 1 omega subunit. When a sigma factor is associated with the core the holoenzyme is formed, which can initiate transcription. Mg(2+) serves as cofactor. The cofactor is Zn(2+).

It carries out the reaction RNA(n) + a ribonucleoside 5'-triphosphate = RNA(n+1) + diphosphate. Its function is as follows. DNA-dependent RNA polymerase catalyzes the transcription of DNA into RNA using the four ribonucleoside triphosphates as substrates. In Xylella fastidiosa (strain Temecula1 / ATCC 700964), this protein is DNA-directed RNA polymerase subunit beta'.